A 268-amino-acid chain; its full sequence is Undecaprenyl-diphosphatase (268 aa).

Helical transmembrane passes span 1-21, 39-59, 85-105, 110-130, 144-164, 187-207, 221-241, and 247-267; these read MSLI…FLPI, QGPL…LVYF, ALLV…LVAF, ALRS…PLWL, MSFK…IPGA, FSML…LIEL, DGLI…AVLM, and IGFL…LVFF.

The protein belongs to the UppP family.

It localises to the cell inner membrane. The enzyme catalyses di-trans,octa-cis-undecaprenyl diphosphate + H2O = di-trans,octa-cis-undecaprenyl phosphate + phosphate + H(+). Its function is as follows. Catalyzes the dephosphorylation of undecaprenyl diphosphate (UPP). Confers resistance to bacitracin. The sequence is that of Undecaprenyl-diphosphatase from Maricaulis maris (strain MCS10) (Caulobacter maris).